The sequence spans 451 residues: Probable glycine dehydrogenase (decarboxylating) subunit 1 (451 aa).

It belongs to the GcvP family. N-terminal subunit subfamily. In terms of assembly, the glycine cleavage system is composed of four proteins: P, T, L and H. In this organism, the P 'protein' is a heterodimer of two subunits.

It carries out the reaction N(6)-[(R)-lipoyl]-L-lysyl-[glycine-cleavage complex H protein] + glycine + H(+) = N(6)-[(R)-S(8)-aminomethyldihydrolipoyl]-L-lysyl-[glycine-cleavage complex H protein] + CO2. In terms of biological role, the glycine cleavage system catalyzes the degradation of glycine. The P protein binds the alpha-amino group of glycine through its pyridoxal phosphate cofactor; CO(2) is released and the remaining methylamine moiety is then transferred to the lipoamide cofactor of the H protein. This chain is Probable glycine dehydrogenase (decarboxylating) subunit 1, found in Thioalkalivibrio sulfidiphilus (strain HL-EbGR7).